The sequence spans 664 residues: RBBP8 N-terminal-like protein (664 aa).

Positions 125–140 (LRGLGDRPKPRAKEGT) are enriched in basic and acidic residues. Disordered regions lie at residues 125 to 284 (LRGL…KLSP) and 369 to 664 (RAGS…WEET). Over residues 241–255 (GTPPPLPARSSPPSP) the composition is skewed to pro residues. Basic and acidic residues predominate over residues 437-454 (ALDKPLDLSEWGRARGQD). Residues 481-496 (SGPLTRSPQALSNGTK) are compositionally biased toward polar residues. Low complexity predominate over residues 516-528 (LPGSQLSLSSPGS). A compositionally biased stretch (pro residues) spans 537-552 (PLPPPHPQPPPHPQPP). Residues 554–570 (LDGHPEPSKAEVLRPES) show a composition bias toward basic and acidic residues. Over residues 584–597 (GLSSQAEATTSTTG) the composition is skewed to polar residues. A compositionally biased stretch (basic residues) spans 628–637 (KKPSRGRRKL). Positions 654-664 (PSPNSSPWEET) are enriched in polar residues.

In Homo sapiens (Human), this protein is RBBP8 N-terminal-like protein (RBBP8NL).